A 326-amino-acid polypeptide reads, in one-letter code: MASVTNLVDSIVVVECGERWRARAEAAGRLLVLINNHTVELSGEHGSAGEFYSVLTDVGVRVACSSGYAIVLTQISGLLPVEPEPGNFSNVTFPENSAKYYTAYGIVDSGYRGVVKAVQFAPGINTSVPPGQMSLGLVLVKLARKSIHVTSIGSTRDGRTSEANLFYDYFAPKRVEDAGYDISAPEDATIDPDESHFVDLPIVFANSNPAVTPCIFGRSSMNRRGLIVLPTRWVAGRTCCFFILNVNKYPVSITKGQRVAQLLLTEDIDDALIPPTVNYDNPFPTYSPSESTKAPQSPVLWKFTTDFDREAPSSLRADGGFGSTGL.

Substrate-binding positions include 218–220 (RSS) and 321–322 (FG).

Belongs to the dUTPase family. Mg(2+) serves as cofactor.

It catalyses the reaction dUTP + H2O = dUMP + diphosphate + H(+). Its function is as follows. Involved in nucleotide metabolism: produces dUMP, the immediate precursor of thymidine nucleotides and decreases the intracellular concentration of dUTP to avoid uracil incorporation into viral DNA. The sequence is that of Deoxyuridine 5'-triphosphate nucleotidohydrolase from Equus caballus (Horse).